We begin with the raw amino-acid sequence, 374 residues long: Isocitrate dehydrogenase [NAD] catalytic subunit 5, mitochondrial (374 aa).

Residues 1-44 (MTMAANLARRLIGNRSTQILGAVNSSSGAASSVARAFCSSTTPI) constitute a mitochondrion transit peptide. Substrate contacts are provided by Arg127, Arg137, Arg158, and Asp245. Asp245, Asp269, and Asp273 together coordinate Mg(2+).

It belongs to the isocitrate and isopropylmalate dehydrogenases family. Heterooligomer of catalytic and regulatory subunits. It depends on Mg(2+) as a cofactor. Mn(2+) serves as cofactor. In terms of tissue distribution, ubiquitous.

It localises to the mitochondrion. The enzyme catalyses D-threo-isocitrate + NAD(+) = 2-oxoglutarate + CO2 + NADH. In terms of biological role, performs an essential role in the oxidative function of the citric acid cycle. In Arabidopsis thaliana (Mouse-ear cress), this protein is Isocitrate dehydrogenase [NAD] catalytic subunit 5, mitochondrial (IDH5).